The sequence spans 100 residues: MAKKSMIEREKKRQKLVNKYAVKRKELKEQIKTSVSFEERFKLQLELQKLPRNSSPTRLHNRCSVTGRPKGYYRDFGLSRHVLREMAHECLLPGVTKSSW.

Belongs to the universal ribosomal protein uS14 family. In terms of assembly, part of the 30S ribosomal subunit.

The protein localises to the plastid. It localises to the chloroplast. Binds 16S rRNA, required for the assembly of 30S particles. The chain is Small ribosomal subunit protein uS14c from Mesostigma viride (Green alga).